The chain runs to 308 residues: E3 ubiquitin-protein ligase RING2 (308 aa).

Ser-2 carries the N-acetylserine modification. Positions 2-179 (SQAVQTNGTQ…AEDNGDSSHC (178 aa)) are interaction with HIP2. Ser-41 is modified (phosphoserine). The RING-type zinc-finger motif lies at 51–91 (CPICLDMLKNTMTTKECLHRFCADCIITALRSGNKECPTCR). Residues 93–98 (KLVSKR) form an interaction with nucleosomes via an acidic patch on histone H2A and histone H2B region. Residue Lys-112 forms a Glycyl lysine isopeptide (Lys-Gly) (interchain with G-Cter in ubiquitin) linkage. Phosphoserine occurs at positions 143 and 168. The tract at residues 157 to 206 (QRGKKQQIENGSGAEDNGDSSHCSNASTHSNQEAGPSNKRTKTSDDSGLE) is disordered. Over residues 176–191 (SSHCSNASTHSNQEAG) the composition is skewed to polar residues. Lys-249 participates in a covalent cross-link: Glycyl lysine isopeptide (Lys-Gly) (interchain with G-Cter in SUMO2).

As to quaternary structure, component of chromatin-associated Polycomb (PcG) complexes. Component of a number of PRC1-like complexes; these complexes contain either the polycomb group ring finger protein PCGF1, or PCGF2, or PCGF3, or BMI1, or PCGF5, or PCGF6. Distinct PRC1-like complexes are composed of a RING1 subunit (RING1B or RING1A), one of the six PCGF proteins (PCGF1, PCGF2, PCGF3, BMI1, PCGF5 or PCGF6), one PHC protein (PHC1, PHC2 or PHC3) and one of the CBX proteins (CBX2, CBX4, CBX6, CBX7 or CBX8). Part of a complex that contains RNF2, UB2D3 and BMI1; within that complex RNF2 and BMI1 form a tight heterodimer, where UB2D3 interacts only with RNF2. The complex composed of RNF2, UB2D3 and BMI1 binds nucleosomes, and has activity only with nucleosomal histone H2A. Part of a complex that contains PCGF5, RNF2 and UBE2D3. Part of a complex that contains AUTS2, PCGF5, RNF2, CSNK2B and RYBP. Interacts with CBX6 and CBX8. Interacts with PHC1, PCGF2, RYBP, CBX7, CBX4, CBX2, RNF1/RING1, BMI1 and PHC2. Interaction with RYBP and CBX7 is mutually exclusive; both compete for the same binding site on RNF2. Component of repressive BCOR complex containing a Polycomb group subcomplex at least composed of RYBP, PCGF1, BCOR and RING1. Interacts with CBX2 and PHC1. Interacts with CHTOP. Interacts with AURKB. Part of the E2F6.com-1 complex in G0 phase composed of E2F6, MGA, MAX, TFDP1, CBX3, BAT8, EUHMTASE1, RNF1/RING1, RNF2/RING2, MBLR, L3MBTL2 and YAF2. Component of some MLL1/MLL complex, at least composed of the core components KMT2A/MLL1, ASH2L, HCFC1/HCF1, WDR5 and RBBP5, as well as the facultative components BACC1, CHD8, E2F6, HSP70, INO80C, KANSL1, LAS1L, MAX, MCRS1, MGA, MYST1/MOF, PELP1, PHF20, PRP31, RING2, RUVB1/TIP49A, RUVB2/TIP49B, SENP3, TAF1, TAF4, TAF6, TAF7, TAF9 and TEX10. Interacts with RYBP, HIP2 and TFCP2. Interacts with NUPR1. Interacts with SAMD7 in a PHC2-dependent manner. Monoubiquitinated, by auto-ubiquitination. Polyubiquitinated in the presence of UBE2D3 (in vitro).

The protein resides in the nucleus. The protein localises to the cytoplasm. Its subcellular location is the chromosome. It catalyses the reaction S-ubiquitinyl-[E2 ubiquitin-conjugating enzyme]-L-cysteine + [acceptor protein]-L-lysine = [E2 ubiquitin-conjugating enzyme]-L-cysteine + N(6)-ubiquitinyl-[acceptor protein]-L-lysine.. The protein operates within protein modification; protein ubiquitination. Functionally, E3 ubiquitin-protein ligase that mediates monoubiquitination of 'Lys-119' of histone H2A (H2AK119Ub), thereby playing a central role in histone code and gene regulation. H2AK119Ub gives a specific tag for epigenetic transcriptional repression and participates in X chromosome inactivation of female mammals. May be involved in the initiation of both imprinted and random X inactivation. Essential component of a Polycomb group (PcG) multiprotein PRC1-like complex, a complex class required to maintain the transcriptionally repressive state of many genes, including Hox genes, throughout development. PcG PRC1 complex acts via chromatin remodeling and modification of histones, rendering chromatin heritably changed in its expressibility. E3 ubiquitin-protein ligase activity is enhanced by BMI1/PCGF4. Acts as the main E3 ubiquitin ligase on histone H2A of the PRC1 complex, while RING1 may rather act as a modulator of RNF2/RING2 activity. Plays a role in the transcriptional repression of genes that are required for pluripotency in embryonic stem cells, thereby contributing to differentiation of the ectodermal and endodermal germ layers. Association with the chromosomal DNA is cell-cycle dependent. In resting B- and T-lymphocytes, interaction with AURKB leads to block its activity, thereby maintaining transcription in resting lymphocytes. Also acts as a negative regulator of autophagy by mediating ubiquitination of AMBRA1, leading to its subsequent degradation. The polypeptide is E3 ubiquitin-protein ligase RING2 (Rnf2) (Rattus norvegicus (Rat)).